Consider the following 431-residue polypeptide: Enolase (431 aa).

Q167 provides a ligand contact to (2R)-2-phosphoglycerate. The active-site Proton donor is the E209. The Mg(2+) site is built by D246, E289, and D316. (2R)-2-phosphoglycerate-binding residues include K341, R370, S371, and K392. K341 (proton acceptor) is an active-site residue.

This sequence belongs to the enolase family. In terms of assembly, component of the RNA degradosome, a multiprotein complex involved in RNA processing and mRNA degradation. It depends on Mg(2+) as a cofactor.

The protein resides in the cytoplasm. It localises to the secreted. It is found in the cell surface. It catalyses the reaction (2R)-2-phosphoglycerate = phosphoenolpyruvate + H2O. It participates in carbohydrate degradation; glycolysis; pyruvate from D-glyceraldehyde 3-phosphate: step 4/5. Functionally, catalyzes the reversible conversion of 2-phosphoglycerate (2-PG) into phosphoenolpyruvate (PEP). It is essential for the degradation of carbohydrates via glycolysis. In Shewanella denitrificans (strain OS217 / ATCC BAA-1090 / DSM 15013), this protein is Enolase.